A 180-amino-acid chain; its full sequence is UPF0149 protein XC_0904 (180 aa).

The protein belongs to the UPF0149 family.

In Xanthomonas campestris pv. campestris (strain 8004), this protein is UPF0149 protein XC_0904.